A 186-amino-acid chain; its full sequence is Bifunctional protein PyrR (186 aa).

Residues 101 to 113 (VVLVDDVLYTGRT) carry the PRPP-binding motif.

It belongs to the purine/pyrimidine phosphoribosyltransferase family. PyrR subfamily.

The catalysed reaction is UMP + diphosphate = 5-phospho-alpha-D-ribose 1-diphosphate + uracil. Functionally, regulates the transcription of the pyrimidine nucleotide (pyr) operon in response to exogenous pyrimidines. Also displays a weak uracil phosphoribosyltransferase activity which is not physiologically significant. The polypeptide is Bifunctional protein PyrR (Syntrophobacter fumaroxidans (strain DSM 10017 / MPOB)).